Reading from the N-terminus, the 305-residue chain is Dihydroorotate dehydrogenase B (NAD(+)), catalytic subunit (305 aa).

FMN contacts are provided by residues Ser23 and 47 to 48; that span reads KG. Residues Lys47 and 71–75 contribute to the substrate site; that span reads NAIGL. Residues Asn101 and Asn129 each coordinate FMN. Asn129 serves as a coordination point for substrate. Cys132 (nucleophile) is an active-site residue. Residues Lys167 and Ile193 each contribute to the FMN site. 194 to 195 lines the substrate pocket; sequence NT. Residues Gly219, 245–246, and 267–268 contribute to the FMN site; these read GG and GT.

Belongs to the dihydroorotate dehydrogenase family. Type 1 subfamily. In terms of assembly, heterotetramer of 2 PyrK and 2 PyrD type B subunits. The cofactor is FMN.

It localises to the cytoplasm. The enzyme catalyses (S)-dihydroorotate + NAD(+) = orotate + NADH + H(+). The protein operates within pyrimidine metabolism; UMP biosynthesis via de novo pathway; orotate from (S)-dihydroorotate (NAD(+) route): step 1/1. Functionally, catalyzes the conversion of dihydroorotate to orotate with NAD(+) as electron acceptor. The polypeptide is Dihydroorotate dehydrogenase B (NAD(+)), catalytic subunit (pyrD) (Geobacter metallireducens (strain ATCC 53774 / DSM 7210 / GS-15)).